Reading from the N-terminus, the 510-residue chain is NAD(P)H-quinone oxidoreductase subunit 2, chloroplastic (510 aa).

The next 11 helical transmembrane spans lie at 24–44, 59–79, 99–119, 124–144, 149–169, 183–203, 295–315, 323–343, 347–367, 395–415, and 418–438; these read LLLF…GLIL, WFYF…LFRW, IFQF…VEYI, MAIT…MFLC, LITI…LSGY, YLLM…WLYG, WHLL…LIAI, MLAY…IVGD, GYAS…GTFA, ALSS…AGFF, and LYLF…IGLL.

Belongs to the complex I subunit 2 family. In terms of assembly, NDH is composed of at least 16 different subunits, 5 of which are encoded in the nucleus.

The protein localises to the plastid. The protein resides in the chloroplast thylakoid membrane. The enzyme catalyses a plastoquinone + NADH + (n+1) H(+)(in) = a plastoquinol + NAD(+) + n H(+)(out). The catalysed reaction is a plastoquinone + NADPH + (n+1) H(+)(in) = a plastoquinol + NADP(+) + n H(+)(out). NDH shuttles electrons from NAD(P)H:plastoquinone, via FMN and iron-sulfur (Fe-S) centers, to quinones in the photosynthetic chain and possibly in a chloroplast respiratory chain. The immediate electron acceptor for the enzyme in this species is believed to be plastoquinone. Couples the redox reaction to proton translocation, and thus conserves the redox energy in a proton gradient. The sequence is that of NAD(P)H-quinone oxidoreductase subunit 2, chloroplastic from Asparagus officinalis (Garden asparagus).